Here is a 350-residue protein sequence, read N- to C-terminus: Nicotinate-nucleotide--dimethylbenzimidazole phosphoribosyltransferase (350 aa).

Residue Glu317 is the Proton acceptor of the active site.

Belongs to the CobT family.

The enzyme catalyses 5,6-dimethylbenzimidazole + nicotinate beta-D-ribonucleotide = alpha-ribazole 5'-phosphate + nicotinate + H(+). Its pathway is nucleoside biosynthesis; alpha-ribazole biosynthesis; alpha-ribazole from 5,6-dimethylbenzimidazole: step 1/2. Its function is as follows. Catalyzes the synthesis of alpha-ribazole-5'-phosphate from nicotinate mononucleotide (NAMN) and 5,6-dimethylbenzimidazole (DMB). The sequence is that of Nicotinate-nucleotide--dimethylbenzimidazole phosphoribosyltransferase from Shewanella putrefaciens (strain CN-32 / ATCC BAA-453).